The sequence spans 518 residues: Chromosomal replication initiator protein DnaA (518 aa).

A domain I, interacts with DnaA modulators region spans residues 1 to 72 (MTLAEFWPLC…VREELAAGRS (72 aa)). Residues 72–180 (SAFVFKPGEG…DAEEARYEQT (109 aa)) are domain II. The tract at residues 145-178 (EPRQAAGSASRPESAAVAKARTDAQRDAEEARYE) is disordered. The segment covering 164-177 (ARTDAQRDAEEARY) has biased composition (basic and acidic residues). Positions 181–397 (NLSPDYTFDT…GAFNRVGASS (217 aa)) are domain III, AAA+ region. Glycine 225, glycine 227, lysine 228, and threonine 229 together coordinate ATP. Residues 398–518 (RFMNRPVIDI…YEKLLILIQN (121 aa)) are domain IV, binds dsDNA.

Belongs to the DnaA family. In terms of assembly, oligomerizes as a right-handed, spiral filament on DNA at oriC.

Its subcellular location is the cytoplasm. Its function is as follows. Plays an essential role in the initiation and regulation of chromosomal replication. ATP-DnaA binds to the origin of replication (oriC) to initiate formation of the DNA replication initiation complex once per cell cycle. Binds the DnaA box (a 9 base pair repeat at the origin) and separates the double-stranded (ds)DNA. Forms a right-handed helical filament on oriC DNA; dsDNA binds to the exterior of the filament while single-stranded (ss)DNA is stabiized in the filament's interior. The ATP-DnaA-oriC complex binds and stabilizes one strand of the AT-rich DNA unwinding element (DUE), permitting loading of DNA polymerase. After initiation quickly degrades to an ADP-DnaA complex that is not apt for DNA replication. Binds acidic phospholipids. The sequence is that of Chromosomal replication initiator protein DnaA from Neisseria meningitidis serogroup A / serotype 4A (strain DSM 15465 / Z2491).